The primary structure comprises 308 residues: N-acetyl-gamma-glutamyl-phosphate reductase (308 aa).

The active site involves cysteine 117.

This sequence belongs to the NAGSA dehydrogenase family. Type 2 subfamily.

The protein localises to the cytoplasm. The catalysed reaction is N-acetyl-L-glutamate 5-semialdehyde + phosphate + NADP(+) = N-acetyl-L-glutamyl 5-phosphate + NADPH + H(+). The protein operates within amino-acid biosynthesis; L-arginine biosynthesis; N(2)-acetyl-L-ornithine from L-glutamate: step 3/4. Catalyzes the NADPH-dependent reduction of N-acetyl-5-glutamyl phosphate to yield N-acetyl-L-glutamate 5-semialdehyde. The protein is N-acetyl-gamma-glutamyl-phosphate reductase of Sinorhizobium fredii (strain NBRC 101917 / NGR234).